The following is a 413-amino-acid chain: Serine hydroxymethyltransferase (413 aa).

(6S)-5,6,7,8-tetrahydrofolate-binding positions include L119 and 123-125 (GHL). Residue K228 is modified to N6-(pyridoxal phosphate)lysine. E243 is a (6S)-5,6,7,8-tetrahydrofolate binding site.

This sequence belongs to the SHMT family. Homodimer. Requires pyridoxal 5'-phosphate as cofactor.

It localises to the cytoplasm. It carries out the reaction (6R)-5,10-methylene-5,6,7,8-tetrahydrofolate + glycine + H2O = (6S)-5,6,7,8-tetrahydrofolate + L-serine. Its pathway is one-carbon metabolism; tetrahydrofolate interconversion. It functions in the pathway amino-acid biosynthesis; glycine biosynthesis; glycine from L-serine: step 1/1. Functionally, catalyzes the reversible interconversion of serine and glycine with tetrahydrofolate (THF) serving as the one-carbon carrier. This reaction serves as the major source of one-carbon groups required for the biosynthesis of purines, thymidylate, methionine, and other important biomolecules. Also exhibits THF-independent aldolase activity toward beta-hydroxyamino acids, producing glycine and aldehydes, via a retro-aldol mechanism. This Desulforamulus reducens (strain ATCC BAA-1160 / DSM 100696 / MI-1) (Desulfotomaculum reducens) protein is Serine hydroxymethyltransferase.